The primary structure comprises 215 residues: Imidazole glycerol phosphate synthase subunit HisH (215 aa).

The region spanning 3 to 215 is the Glutamine amidotransferase type-1 domain; sequence TAVVFDYGFG…QLLKNWIATL (213 aa). C81 (nucleophile) is an active-site residue. Active-site residues include H196 and E198.

Heterodimer of HisH and HisF.

It localises to the cytoplasm. It carries out the reaction 5-[(5-phospho-1-deoxy-D-ribulos-1-ylimino)methylamino]-1-(5-phospho-beta-D-ribosyl)imidazole-4-carboxamide + L-glutamine = D-erythro-1-(imidazol-4-yl)glycerol 3-phosphate + 5-amino-1-(5-phospho-beta-D-ribosyl)imidazole-4-carboxamide + L-glutamate + H(+). It catalyses the reaction L-glutamine + H2O = L-glutamate + NH4(+). It participates in amino-acid biosynthesis; L-histidine biosynthesis; L-histidine from 5-phospho-alpha-D-ribose 1-diphosphate: step 5/9. Functionally, IGPS catalyzes the conversion of PRFAR and glutamine to IGP, AICAR and glutamate. The HisH subunit catalyzes the hydrolysis of glutamine to glutamate and ammonia as part of the synthesis of IGP and AICAR. The resulting ammonia molecule is channeled to the active site of HisF. The polypeptide is Imidazole glycerol phosphate synthase subunit HisH (Bifidobacterium longum (strain NCC 2705)).